The primary structure comprises 159 residues: Lipoprotein signal peptidase (159 aa).

2 helical membrane passes run serine 64–valine 84 and proline 89–isoleucine 109. Catalysis depends on residues aspartate 119 and aspartate 135. Residues isoleucine 130–tryptophan 150 traverse the membrane as a helical segment.

It belongs to the peptidase A8 family.

It localises to the cell inner membrane. The enzyme catalyses Release of signal peptides from bacterial membrane prolipoproteins. Hydrolyzes -Xaa-Yaa-Zaa-|-(S,diacylglyceryl)Cys-, in which Xaa is hydrophobic (preferably Leu), and Yaa (Ala or Ser) and Zaa (Gly or Ala) have small, neutral side chains.. The protein operates within protein modification; lipoprotein biosynthesis (signal peptide cleavage). This protein specifically catalyzes the removal of signal peptides from prolipoproteins. This Parasynechococcus marenigrum (strain WH8102) protein is Lipoprotein signal peptidase.